A 145-amino-acid chain; its full sequence is Plastocyanin, chloroplastic (145 aa).

The N-terminal 48 residues, 1 to 48 (MASLMRKAAVAPAKATRTTVKASASLQRVAQAAGVAVAGFSLALSANA), are a transit peptide targeting the chloroplast. Positions 49–145 (ANVKLGADSG…AGMVGKVIVQ (97 aa)) constitute a Plastocyanin-like domain. Cu cation is bound by residues His85, Cys130, His133, and Met138.

The protein belongs to the plastocyanin family. Requires Cu(2+) as cofactor.

It is found in the plastid. Its subcellular location is the chloroplast thylakoid membrane. In terms of biological role, participates in electron transfer between P700 and the cytochrome b6-f complex in photosystem I. In Tetradesmus obliquus (Green alga), this protein is Plastocyanin, chloroplastic (PETE).